The sequence spans 388 residues: Na(+)/H(+) antiporter NhaA (388 aa).

Transmembrane regions (helical) follow at residues 13 to 33, 36 to 56, 59 to 79, 95 to 115, 125 to 145, 154 to 174, 179 to 199, 213 to 233, 259 to 279, 287 to 307, 328 to 348, and 363 to 383; these read AAGGIILIVAAIIALIMANTP, GIYHAFLNLPVMVKVSSLEIA, LLLWINDGLMAIFFLVVGLEV, VFPAIAALGGMLAPALIYLMF, GWAIPAATDIAFALGVMALLG, VFLLALAIIDDLGVIVIIALF, VSMAALGVAAASIAVLAFMNW, LVLWVAILKSGVHATLAGVII, VAFLILPLFAFANAGVSLQGV, LLPVGIAAGLFIGKPLGIFTF, VFAVSVLCGIGFTMSIFIASL, and LGILIGSTTAAVVGYGLLRMS.

The protein belongs to the NhaA Na(+)/H(+) (TC 2.A.33) antiporter family.

It localises to the cell inner membrane. The catalysed reaction is Na(+)(in) + 2 H(+)(out) = Na(+)(out) + 2 H(+)(in). In terms of biological role, na(+)/H(+) antiporter that extrudes sodium in exchange for external protons. In Serratia proteamaculans (strain 568), this protein is Na(+)/H(+) antiporter NhaA.